The primary structure comprises 252 residues: Fructose-1,6-bisphosphatase/inositol-1-monophosphatase (252 aa).

E65, D81, I83, and D84 together coordinate Mg(2+). Substrate contacts are provided by residues D84–S86, R170, F175, and R194. Position 201 (D201) interacts with Mg(2+).

It belongs to the inositol monophosphatase superfamily. FBPase class 4 family. Homodimer. Requires Mg(2+) as cofactor.

It catalyses the reaction beta-D-fructose 1,6-bisphosphate + H2O = beta-D-fructose 6-phosphate + phosphate. It carries out the reaction a myo-inositol phosphate + H2O = myo-inositol + phosphate. IMPase activity is inhibited by Ca(2+) and Zn(2+). In contrast to mammalian I-1-P phosphatases, is not inhibited by Li(+) up to 100 mM. Functionally, phosphatase with broad specificity; it can dephosphorylate fructose 1,6-bisphosphate, both D and L isomers of inositol-1-phosphate (I-1-P), 2'-AMP, pNPP, beta-glycerol phosphate, and alpha-D-glucose-1-phosphate. Cannot hydrolyze glucose-6-phosphate, fructose-6-phosphate, NAD(+) or 5'-AMP. May be involved in the biosynthesis of a unique osmolyte, di-myo-inositol 1,1-phosphate. The chain is Fructose-1,6-bisphosphatase/inositol-1-monophosphatase (suhB) from Methanocaldococcus jannaschii (strain ATCC 43067 / DSM 2661 / JAL-1 / JCM 10045 / NBRC 100440) (Methanococcus jannaschii).